The sequence spans 253 residues: Phycoerythrobilin:ferredoxin oxidoreductase (253 aa).

Belongs to the HY2 family.

It catalyses the reaction (3Z)-phycoerythrobilin + oxidized 2[4Fe-4S]-[ferredoxin] = 15,16-dihydrobiliverdin + reduced 2[4Fe-4S]-[ferredoxin] + 2 H(+). Catalyzes the two-electron reduction of the C2 and C3(1) diene system of 15,16-dihydrobiliverdin. The polypeptide is Phycoerythrobilin:ferredoxin oxidoreductase (Prochlorococcus marinus (strain MIT 9301)).